We begin with the raw amino-acid sequence, 369 residues long: Somatostatin receptor type 2 (369 aa).

Residues 1-43 (MDMAYELLNGSQPWLSSPFDLNGSVATANSSNQTEPYYDLTSN) are Extracellular-facing. Residues Asn9, Asn22, Asn29, and Asn32 are each glycosylated (N-linked (GlcNAc...) asparagine). The chain crosses the membrane as a helical span at residues 44–67 (AVLTFIYFVVCIIGLCGNTLVIYV). Residues 68 to 78 (ILRYAKMKTIT) are Cytoplasmic-facing. Residues 79–103 (NIYILNLAIADELFMLGLPFLAMQV) form a helical membrane-spanning segment. Residues 104–118 (ALVHWPFGKAICRVV) are Extracellular-facing. A disulfide bridge connects residues Cys115 and Cys193. The chain crosses the membrane as a helical span at residues 119-138 (MTVDGINQFTSIFCLTVMSI). The Cytoplasmic portion of the chain corresponds to 139-161 (DRYLAVVHPIKSAKWRRPRTAKM). Residues 162–181 (INVAVWGVSLLVILPIMIYA) traverse the membrane as a helical segment. Over 182–207 (GLRSNQWGRSSCTINWPGESGAWYTG) the chain is Extracellular. Residues 208–229 (FIIYAFILGFLVPLTIICLCYL) form a helical membrane-spanning segment. Residues 230 to 253 (FIIIKVKSSGIRVGSSKRKKSEKK) lie on the Cytoplasmic side of the membrane. Residues 254–278 (VTRMVSIVVAVFIFCWLPFYIFNVS) form a helical membrane-spanning segment. At 279 to 288 (SVSVAISPTP) the chain is on the extracellular side. A helical transmembrane segment spans residues 289 to 303 (ALKGMFDFVVVLTYA). Topologically, residues 304 to 369 (NSCANPILYA…LLNGDLQTSI (66 aa)) are cytoplasmic. Residue Cys328 is the site of S-palmitoyl cysteine attachment. Residues Ser341, Ser343, and Ser348 each carry the phosphoserine modification. Phosphothreonine occurs at positions 353 and 354.

It belongs to the G-protein coupled receptor 1 family. In terms of assembly, homodimer and heterodimer with SSTR3 and SSTR5. Heterodimerization with SSTR3 inactivates SSTR3 receptor function. Heterodimerization with SSTR5 is enhanced by agonist stimulation of SSTR2 and increases SSTR2 cell growth inhibition activity. Following agonist stimulation, homodimers dissociate into monomers which is required for receptor internalization. Interacts with beta-arrestin; this interaction is necessary for receptor internalization and is destabilized by heterodimerization with SSTR5 which results in increased recycling of SSTR2 to the cell surface. Interacts (via C-terminus) with SHANK1 (via PDZ domain). In terms of processing, phosphorylated on serine and threonine residues in response to agonist stimulation, leading to receptor desensitization and rapid internalization. Phosphorylated to a greater extent on serine than threonine residues. Threonine phosphorylation is required for arrestin binding and receptor endocytosis but is not necessary for desensitization.

The protein localises to the cell membrane. Its subcellular location is the cytoplasm. In terms of biological role, receptor for somatostatin-14 and -28. This receptor is coupled via pertussis toxin sensitive G proteins to inhibition of adenylyl cyclase. In addition it stimulates phosphotyrosine phosphatase and PLC via pertussis toxin insensitive as well as sensitive G proteins. Inhibits calcium entry by suppressing voltage-dependent calcium channels. Acts as the functionally dominant somatostatin receptor in pancreatic alpha- and beta-cells where it mediates the inhibitory effect of somatostatin-14 on hormone secretion. Inhibits cell growth through enhancement of MAPK1 and MAPK2 phosphorylation and subsequent up-regulation of CDKN1B. Stimulates neuronal migration and axon outgrowth and may participate in neuron development and maturation during brain development. Mediates negative regulation of insulin receptor signaling through PTPN6. Inactivates SSTR3 receptor function following heterodimerization. The chain is Somatostatin receptor type 2 (SSTR2) from Sus scrofa (Pig).